A 738-amino-acid chain; its full sequence is Interleukin-17 receptor D (738 aa).

An N-terminal signal peptide occupies residues 1 to 16 (MAPWLQLCSFFFTVNA). Topologically, residues 17 to 299 (CLNGSQLAVA…VQSPWAGPIR (283 aa)) are extracellular. Residues N19, N55, N62, N80, N137, N171, N206, and N277 are each glycosylated (N-linked (GlcNAc...) asparagine). The helical transmembrane segment at 300 to 320 (AVAITVPLVVISAFATLFTVM) threads the bilayer. Residues 321–738 (CRKKQQENIY…TDELQALAPL (418 aa)) are Cytoplasmic-facing. In terms of domain architecture, SEFIR spans 355-509 (QPKVFLCYSN…LMDHLPELCA (155 aa)). The tract at residues 653 to 738 (GSPSEMPRDS…TDELQALAPL (86 aa)) is disordered. The span at 667-702 (SSVPSSELSLPLMEGLSPDQIETSSLTESVSSSSGL) shows a compositional bias: low complexity. A compositionally biased stretch (basic and acidic residues) spans 720–731 (SREHGCHSHTDE).

Self-associates. Interacts with FGFR2 and phosphorylated MAP2K1 or MAP2K2. Associates with a MAP2K1/2-MAPK1/3 complex. Interacts with FGFR1 and MAP3K7.

It is found in the golgi apparatus membrane. The protein resides in the cell membrane. Feedback inhibitor of fibroblast growth factor mediated Ras-MAPK signaling and ERK activation. Regulates the nuclear ERK signaling pathway by spatially blocking nuclear translocation of activated ERK. Mediates JNK activation and may be involved in apoptosis. May inhibit FGF-induced FGFR1 tyrosine phosphorylation. Might have a role in the early stages of fate specification of GnRH-secreting neurons. Inhibits TGFB-induced epithelial-to-mesenchymal transition in lens epithelial cells. This is Interleukin-17 receptor D (Il17rd) from Mus musculus (Mouse).